A 400-amino-acid chain; its full sequence is MGGWSSKHRKGMGTNLSVPNPLGFFPDHQLDPAFGANSNNPDWDFNPNKDHWPEANQVGAGAFGPGFTPPHGGFLGWSPQAQGILTTVPAAPPPASTNRQSGRQPTPISPPLRDTHPQAMQWNSTAFHQALQDPRVRGLYFPAGGSSSGTVNPVPNTVSHISSIFTKTGDPASNMESTTSGFLGPLLVLQAGFFLLTRILTIPQSLDSWWTSLNFLGGAPGCIGQNSQSQTSNHSPTSCPPTCPGYRWMCLRRFIIFLFILLLCLIFLLVLLDYQGMLPVCPLLPGSTTTSTGPCRTCTITAQGTSMFPSCCCTKPSDGNCTCIPIPSSWGFAKFLWEWASVRFSWLSLLVPFVQWFAGLSPTVWLSVIWMIWYWGPSLYNILSPFLPLLPIFLCLWVYI.

Residue methionine 1 is modified to N-acetylmethionine. A lipid anchor (N-myristoyl glycine; by host) is attached at glycine 2. The tract at residues 2-119 is pre-S1; the sequence is GGWSSKHRKG…PPLRDTHPQA (118 aa). Positions 2–174 are pre-S; it reads GGWSSKHRKG…FTKTGDPASN (173 aa). At 2 to 181 the chain is on the virion surface; in external conformation side; it reads GGWSSKHRKG…ASNMESTTSG (180 aa). The Intravirion; in internal conformation segment spans residues 2 to 253; that stretch reads GGWSSKHRKG…PGYRWMCLRR (252 aa). Tryptophan 4 carries an N-linked (GlcNAc...) asparagine glycan. The disordered stretch occupies residues 89–117; that stretch reads PAAPPPASTNRQSGRQPTPISPPLRDTHP. The span at 96-106 shows a compositional bias: polar residues; it reads STNRQSGRQPT. The pre-S2 stretch occupies residues 120-174; the sequence is MQWNSTAFHQALQDPRVRGLYFPAGGSSSGTVNPVPNTVSHISSIFTKTGDPASN. Residues 182–202 traverse the membrane as a helical segment; that stretch reads FLGPLLVLQAGFFLLTRILTI. Residues 203 to 253 lie on the Intravirion; in external conformation side of the membrane; it reads PQSLDSWWTSLNFLGGAPGCIGQNSQSQTSNHSPTSCPPTCPGYRWMCLRR. The chain crosses the membrane as a helical span at residues 254-274; that stretch reads FIIFLFILLLCLIFLLVLLDY. Residues 275–348 are Virion surface-facing; that stretch reads QGMLPVCPLL…WASVRFSWLS (74 aa). The N-linked (GlcNAc...) asparagine; by host glycan is linked to asparagine 320. Residues 349–369 traverse the membrane as a helical segment; sequence LLVPFVQWFAGLSPTVWLSVI. Topologically, residues 370–375 are intravirion; sequence WMIWYW. Residues 376 to 398 traverse the membrane as a helical segment; sequence GPSLYNILSPFLPLLPIFLCLWV. Residues 399-400 are Virion surface-facing; the sequence is YI.

It belongs to the orthohepadnavirus major surface antigen family. In its internal form (Li-HBsAg), interacts with the capsid protein and with the isoform S. Interacts with host chaperone CANX. In terms of assembly, associates with host chaperone CANX through its pre-S2 N glycan; this association may be essential for isoform M proper secretion. As to quaternary structure, interacts with isoform L. Interacts with the antigens of satellite virus HDV (HDVAgs); this interaction is required for encapsidation of HDV genomic RNA. Post-translationally, isoform M is N-terminally acetylated by host at a ratio of 90%, and N-glycosylated by host at the pre-S2 region. Myristoylated.

It is found in the virion membrane. Functionally, the large envelope protein exists in two topological conformations, one which is termed 'external' or Le-HBsAg and the other 'internal' or Li-HBsAg. In its external conformation the protein attaches the virus to cell receptors and thereby initiating infection. This interaction determines the species specificity and liver tropism. This attachment induces virion internalization predominantly through caveolin-mediated endocytosis. The large envelope protein also assures fusion between virion membrane and endosomal membrane. In its internal conformation the protein plays a role in virion morphogenesis and mediates the contact with the nucleocapsid like a matrix protein. Its function is as follows. The middle envelope protein plays an important role in the budding of the virion. It is involved in the induction of budding in a nucleocapsid independent way. In this process the majority of envelope proteins bud to form subviral lipoprotein particles of 22 nm of diameter that do not contain a nucleocapsid. The sequence is that of Large envelope protein from Homo sapiens (Human).